The following is a 1081-amino-acid chain: Teashirt homolog 3 (1081 aa).

Disordered regions lie at residues 141-161 (PSSEKNNGSSSSSSSSSSSCG) and 238-257 (HYRDDNHETDNNNPKRWSKP). The span at 148 to 161 (GSSSSSSSSSSSCG) shows a compositional bias: low complexity. 2 C2H2-type zinc fingers span residues 214–238 (FRCKDCSAAYDTLVELTVHMNETGH) and 275–299 (LKCMYCGHSFESLQDLSVHMIKTKH). Residues 238-247 (HYRDDNHETD) show a composition bias toward basic and acidic residues. Residues 325–364 (SLELELPSSPDSTGGTPKATISDTNDALQKNSNPYITPNN) are disordered. The span at 335-364 (DSTGGTPKATISDTNDALQKNSNPYITPNN) shows a compositional bias: polar residues. Residues 386 to 404 (LKCMECGSSHDTLQELTAH) form a C2H2-type 3; atypical zinc finger. Residues 473–491 (EVDKEKAVTDEKPKQKDKP) are compositionally biased toward basic and acidic residues. Disordered regions lie at residues 473–502 (EVDKEKAVTDEKPKQKDKPGEEEEKCDISS), 579–604 (NSEIVSPTKNQTLVSPPSSQTSPMPK), 626–687 (EKMK…LAEP), and 855–897 (TESH…RQSN). Residues 581-603 (EIVSPTKNQTLVSPPSSQTSPMP) are compositionally biased toward polar residues. Residues 606–630 (NFHAMEELVKKVTEKVAKVEEKMKE) adopt a coiled-coil conformation. Phosphoserine is present on serine 682. Over residues 856–869 (ESHTSKSSTPSSIS) the composition is skewed to low complexity. The homeobox; atypical DNA-binding region spans 891-961 (RKGRQSNWNP…NVKYQLRRTG (71 aa)). 2 C2H2-type zinc fingers span residues 976-998 (FFCNDCASQIRTPSTYISHLESH) and 1041-1064 (YQCKLCNRTFASKHAVKLHLSKTH).

This sequence belongs to the teashirt C2H2-type zinc-finger protein family. Interacts (via homeobox domain) with APBB1 (via PID domain 1). Interacts (via N-terminus) with HDAC1 and HDAC2; the interaction is direct. Found in a trimeric complex with APBB1 and HDAC1; the interaction between HDAC1 and APBB1 is mediated by TSHZ3. Expressed in brain; strongly reduced in post-mortem elderly subjects with Alzheimer disease. Expressed in the fetal neocortex.

It localises to the nucleus. The protein localises to the cell projection. The protein resides in the growth cone. Transcriptional regulator involved in developmental processes. Functions in association with APBB1, SET and HDAC factors as a transcriptional repressor, that inhibits the expression of CASP4. TSHZ3-mediated transcription repression involves the recruitment of histone deacetylases HDAC1 and HDAC2. Associates with chromatin in a region surrounding the CASP4 transcriptional start site(s). Regulates the development of neurons involved in both respiratory rhythm and airflow control. Promotes maintenance of nucleus ambiguus (nA) motoneurons, which govern upper airway function, and establishes a respiratory rhythm generator (RRG) activity compatible with survival at birth. Involved in the differentiation of the proximal uretic smooth muscle cells during developmental processes. Involved in the up-regulation of myocardin, that directs the expression of smooth muscle cells in the proximal ureter. Involved in the modulation of glutamatergic synaptic transmission and long-term synaptic potentiation. In Homo sapiens (Human), this protein is Teashirt homolog 3 (TSHZ3).